We begin with the raw amino-acid sequence, 232 residues long: N-(5'-phosphoribosyl)anthranilate isomerase (232 aa).

It belongs to the TrpF family.

It carries out the reaction N-(5-phospho-beta-D-ribosyl)anthranilate = 1-(2-carboxyphenylamino)-1-deoxy-D-ribulose 5-phosphate. It functions in the pathway amino-acid biosynthesis; L-tryptophan biosynthesis; L-tryptophan from chorismate: step 3/5. The protein is N-(5'-phosphoribosyl)anthranilate isomerase (TRP1) of Wickerhamomyces anomalus (Yeast).